A 303-amino-acid polypeptide reads, in one-letter code: Secreted mono- and diacylglycerol lipase LIP4 (303 aa).

The N-terminal stretch at 1-16 (MHFLAFLLCLIPLALC) is a signal peptide. C54 and C293 are joined by a disulfide. The Nucleophile role is filled by S167. D224 is an active-site residue.

This sequence belongs to the AB hydrolase superfamily. Lipase family. Class 3 subfamily.

Its subcellular location is the secreted. It carries out the reaction a monoacylglycerol + H2O = glycerol + a fatty acid + H(+). It catalyses the reaction a diacylglycerol + H2O = a monoacylglycerol + a fatty acid + H(+). Secreted lipase involved in Dandruff and seborrheic dermatitis (D/SD) probably via lipase-mediated breakdown of sebaceous lipids and release of irritating free fatty acids. Shows activity against monoglyceride and diglyceride substrates. Due to an absence of fatty acid synthase genes in Malassezia species, secretory lipases are essential for the yeast to generate free fatty acids from degradation of sebum and assimilate them as lipid sources for growth. Plays an essential role at the pathogen-host interface during disease progression. The polypeptide is Secreted mono- and diacylglycerol lipase LIP4 (Malassezia restricta (strain ATCC 96810 / NBRC 103918 / CBS 7877) (Seborrheic dermatitis infection agent)).